An 82-amino-acid chain; its full sequence is Myosin light chain alkali (82 aa).

One can recognise an EF-hand domain in the interval 7 to 42 (GCYEDFIECLKLYDKEENGTMLLAELQHALLALGEN).

As to quaternary structure, myosin is a hexamer of 2 heavy chains and 4 light chains.

The chain is Myosin light chain alkali (Mlc1) from Drosophila teissieri (Fruit fly).